The chain runs to 335 residues: Glyceraldehyde-3-phosphate dehydrogenase (335 aa).

Residues 11–12, Asp33, and Lys78 contribute to the NAD(+) site; that span reads RI. Residues 148-150, Thr179, 208-209, and Arg231 contribute to the D-glyceraldehyde 3-phosphate site; these read SST and TG. Asn313 is a binding site for NAD(+).

It belongs to the glyceraldehyde-3-phosphate dehydrogenase family. In terms of assembly, homotetramer.

Its subcellular location is the cytoplasm. The catalysed reaction is D-glyceraldehyde 3-phosphate + phosphate + NAD(+) = (2R)-3-phospho-glyceroyl phosphate + NADH + H(+). The protein operates within carbohydrate degradation; glycolysis; pyruvate from D-glyceraldehyde 3-phosphate: step 1/5. In Pleurotus sajor-caju (Oyster mushroom), this protein is Glyceraldehyde-3-phosphate dehydrogenase (GPD).